Here is a 694-residue protein sequence, read N- to C-terminus: Lon-like protease BrxL (694 aa).

It belongs to the BrxL family.

Functionally, BREX systems (bacteriophage exclusion) provide immunity against bacteriophage. Part of a type 1 BREX system which protects against dsDNA phage. This system allows phage adsorption but prevents phage DNA replication, without degradation of the phage DNA. Methylation of bacterial DNA by PglX guides self/non-self discrimination. When the brxA-brxB-brxC-pglX-pglZ-brxL genes are transformed into a susceptible E.coli strain (BW25113) they confer very high resistance to infection by bacteriophage VR7 and VpaE1, about 100-fold protection against lambda, T5 and T7 and no protection against RNA phage Qbeta, ssDNA phage M13 or dSDNA phage T4 and VR5. Glycosylated phage DNA is not susceptible to BREX. The BREX system does not confer resistance to lysogenic lambda phage, i.e. prophage that are integrated into the chromosomal DNA and then induced to form phage. Expression of this protein alone is toxic. This is Lon-like protease BrxL from Escherichia coli O9:H4 (strain HS).